A 485-amino-acid polypeptide reads, in one-letter code: Pyruvate kinase (485 aa).

Substrate is bound at residue R33. Residues N35, S37, D67, and T68 each coordinate K(+). 35–38 (NFSH) lines the ATP pocket. ATP contacts are provided by R74 and K155. E221 serves as a coordination point for Mg(2+). 3 residues coordinate substrate: G244, D245, and T277. D245 serves as a coordination point for Mg(2+).

The protein belongs to the pyruvate kinase family. In terms of assembly, homotetramer. It depends on Mg(2+) as a cofactor. The cofactor is K(+).

It catalyses the reaction pyruvate + ATP = phosphoenolpyruvate + ADP + H(+). It functions in the pathway carbohydrate degradation; glycolysis; pyruvate from D-glyceraldehyde 3-phosphate: step 5/5. The protein is Pyruvate kinase (pyk) of Chlamydia trachomatis serovar D (strain ATCC VR-885 / DSM 19411 / UW-3/Cx).